We begin with the raw amino-acid sequence, 292 residues long: UPF0696 protein C11orf68 homolog (292 aa).

The span at 1–10 (MAAAAAAVAG) shows a compositional bias: low complexity. Residues 1 to 60 (MAAAAAAVAGAGRGGGGGADPGQERSRARSWVGAERSEGRRMEPNEELEEEDSPGGREDG) form a disordered region. Residues 11–20 (AGRGGGGGAD) show a composition bias toward gly residues. Over residues 35-44 (ERSEGRRMEP) the composition is skewed to basic and acidic residues.

Belongs to the UPF0696 family.

The protein is UPF0696 protein C11orf68 homolog (Bles03) of Rattus norvegicus (Rat).